We begin with the raw amino-acid sequence, 154 residues long: Lipoprotein signal peptidase (154 aa).

The next 2 helical transmembrane spans lie at 55–75 (GHMWFFYLITVVVIGIIIYIM) and 84–104 (LFSISLAFILGGAIGNFIDRV). Residues Asp111 and Asp129 contribute to the active site. Residues 124 to 144 (IFNVADAALSVGVVLMLVYVF) form a helical membrane-spanning segment.

It belongs to the peptidase A8 family.

The protein localises to the cell membrane. It catalyses the reaction Release of signal peptides from bacterial membrane prolipoproteins. Hydrolyzes -Xaa-Yaa-Zaa-|-(S,diacylglyceryl)Cys-, in which Xaa is hydrophobic (preferably Leu), and Yaa (Ala or Ser) and Zaa (Gly or Ala) have small, neutral side chains.. It participates in protein modification; lipoprotein biosynthesis (signal peptide cleavage). Functionally, this protein specifically catalyzes the removal of signal peptides from prolipoproteins. In Listeria monocytogenes serotype 4b (strain CLIP80459), this protein is Lipoprotein signal peptidase.